A 124-amino-acid polypeptide reads, in one-letter code: Small ribosomal subunit protein uS13 (124 aa).

Residues 94-124 are disordered; sequence KGLPVRGQRTKTNARTRKGPKRTVAGKKKAR.

The protein belongs to the universal ribosomal protein uS13 family. As to quaternary structure, part of the 30S ribosomal subunit. Forms a loose heterodimer with protein S19. Forms two bridges to the 50S subunit in the 70S ribosome.

Functionally, located at the top of the head of the 30S subunit, it contacts several helices of the 16S rRNA. In the 70S ribosome it contacts the 23S rRNA (bridge B1a) and protein L5 of the 50S subunit (bridge B1b), connecting the 2 subunits; these bridges are implicated in subunit movement. Contacts the tRNAs in the A and P-sites. This Pseudarthrobacter chlorophenolicus (strain ATCC 700700 / DSM 12829 / CIP 107037 / JCM 12360 / KCTC 9906 / NCIMB 13794 / A6) (Arthrobacter chlorophenolicus) protein is Small ribosomal subunit protein uS13.